Reading from the N-terminus, the 314-residue chain is Formate-nitrite transporter (314 aa).

The Cytoplasmic portion of the chain corresponds to 1–47; that stretch reads MQKSTSKYVIDPISIKTNCSSEESYIRCVEYGKGKAHYRNLILLAKA. Residues 48–68 traverse the membrane as a helical segment; the sequence is ILAGVFVGVCAHASGIAGGLF. The Extracellular segment spans residues 69 to 77; it reads YYHKLREYV. The chain crosses the membrane as a helical span at residues 78–98; it reads GISMSAFVYGFTFPIAFLCII. Residues 99–128 are Cytoplasmic-facing; it reads CTGSDLFTGNTLAVTTALLQKKLGLLCYMR. Residues 129 to 149 traverse the membrane as a helical segment; the sequence is VMCISLVGNYIGAVAFAFFVS. Over 150 to 185 the chain is Extracellular; it reads YGSGAFSINTDTSKNHIFQFLNDIAIKKVSHSFIEC. A helical membrane pass occupies residues 186–206; sequence ICLAIGCNIFVCLAVYFVLSI. Residues 207–211 lie on the Cytoplasmic side of the membrane; sequence KDGSG. The helical transmembrane segment at 212–232 threads the bilayer; that stretch reads LVFSVFFAVYAFAIAGYEHII. Over 233 to 260 the chain is Extracellular; the sequence is ANIYTLNLALMISNDISFTQVYFKNLLP. The chain crosses the membrane as a helical span at residues 261–281; the sequence is TLIGNYIAGGLVLAFPLFFIY. The Cytoplasmic segment spans residues 282 to 314; that stretch reads RSCYYDYDKMNDELNTVVLKTLSLELQNESNHI.

This sequence belongs to the FNT transporter (TC 1.A.16) family. Homopentamer.

The protein resides in the cell membrane. Its subcellular location is the vacuole membrane. It catalyses the reaction (S)-lactate(in) + H(+)(in) = (S)-lactate(out) + H(+)(out). It carries out the reaction formate(in) + H(+)(in) = formate(out) + H(+)(out). The enzyme catalyses pyruvate(out) + H(+)(out) = pyruvate(in) + H(+)(in). The catalysed reaction is acetate(out) + H(+)(out) = acetate(in) + H(+)(in). Its activity is regulated as follows. Inhibited by the Malaria Box compound MMV007839 and its derivatives BH296 and BH267.meta. In terms of biological role, monocarboxylate-proton symporter that mediates the efflux of the waste product lactate in the intraerythrocytic parasites; active in acidic-to-neutral pH range. Transports L-lactate. This Plasmodium malariae protein is Formate-nitrite transporter.